Consider the following 130-residue polypeptide: Large ribosomal subunit protein bL20 (130 aa).

Belongs to the bacterial ribosomal protein bL20 family.

Binds directly to 23S ribosomal RNA and is necessary for the in vitro assembly process of the 50S ribosomal subunit. It is not involved in the protein synthesizing functions of that subunit. The sequence is that of Large ribosomal subunit protein bL20 from Solibacter usitatus (strain Ellin6076).